A 452-amino-acid polypeptide reads, in one-letter code: MGQKIHAFMFPWFAFGHMTPYLHLGNKLAEKGHRVTFLLPKKAQKQLEHQNLFPHGIVFHPLVIPHVDGLPAGAETASDIPISLVKFLSIAMDLTRDQIEAAIGALRPDLILFDLAHWVPEMAKALKVKSMLYNVMSATSIAHDLVPGGELGVAPPGYPSSKALYREHDAHALLTFSGFYKRFYHRFTTGLMNCDFISIRTCEEIEGKFCDYIESQYKKKVLLTGPMLPEPDKSKPLEDQWSHWLSGFGQGSVVFCALGSQTILEKNQFQELCLGIELTGLPFLVAVKPPKGANTIHEALPEGFEERVKGRGIVWGEWVQQPSWQPLILAHPSVGCFVSHCGFGSMWESLMSDCQIVFIPVLNDQVLTTRVMTEELEVSVEVQREETGWFSKENLSGAIMSLMDQDSEIGNQVRRNHSKLKETLASPGLLTGYTDKFVDTLENLVNEQGYIS.

Residues S260, 319–325 (VQQPSWQ), 340–348 (HCGFGSMWE), and 362–365 (LNDQ) contribute to the UDP-alpha-D-glucose site.

The protein belongs to the UDP-glycosyltransferase family.

The polypeptide is UDP-glycosyltransferase 79B11 (UGT79B11) (Arabidopsis thaliana (Mouse-ear cress)).